Reading from the N-terminus, the 103-residue chain is Nucleoid-associated protein Adeh_3636 (103 aa).

It belongs to the YbaB/EbfC family. Homodimer.

The protein resides in the cytoplasm. It is found in the nucleoid. In terms of biological role, binds to DNA and alters its conformation. May be involved in regulation of gene expression, nucleoid organization and DNA protection. The sequence is that of Nucleoid-associated protein Adeh_3636 from Anaeromyxobacter dehalogenans (strain 2CP-C).